Here is a 296-residue protein sequence, read N- to C-terminus: Ribosomal RNA small subunit methyltransferase A (296 aa).

Residues asparagine 31, leucine 33, glycine 58, glutamate 79, aspartate 104, and asparagine 129 each coordinate S-adenosyl-L-methionine.

This sequence belongs to the class I-like SAM-binding methyltransferase superfamily. rRNA adenine N(6)-methyltransferase family. RsmA subfamily.

It localises to the cytoplasm. It catalyses the reaction adenosine(1518)/adenosine(1519) in 16S rRNA + 4 S-adenosyl-L-methionine = N(6)-dimethyladenosine(1518)/N(6)-dimethyladenosine(1519) in 16S rRNA + 4 S-adenosyl-L-homocysteine + 4 H(+). Its function is as follows. Specifically dimethylates two adjacent adenosines (A1518 and A1519) in the loop of a conserved hairpin near the 3'-end of 16S rRNA in the 30S particle. May play a critical role in biogenesis of 30S subunits. This chain is Ribosomal RNA small subunit methyltransferase A, found in Shouchella clausii (strain KSM-K16) (Alkalihalobacillus clausii).